An 802-amino-acid polypeptide reads, in one-letter code: Homeobox-leucine zipper protein ANTHOCYANINLESS 2 (802 aa).

The interval 71–143 (QPERGTNRGE…RKKRYHRHTP (73 aa)) is disordered. A compositionally biased stretch (basic and acidic residues) spans 103 to 113 (RSREEEHESRS). A compositionally biased stretch (basic residues) spans 133–142 (PRKKRYHRHT). A DNA-binding region (homeobox) is located at residues 134-193 (RKKRYHRHTPQQIQELESMFKECPHPDEKQRLELSKRLCLETRQVKFWFQNRRTQMKTQL). Positions 182-221 (FQNRRTQMKTQLERHENALLRQENDKLRAENMSIREAMRN) form a coiled coil. An START domain is found at 315-546 (GIDQKSVLLE…LQRQCECLAI (232 aa)).

This sequence belongs to the HD-ZIP homeobox family. Class IV subfamily. In terms of assembly, interacts with AIL7/PLT7, ANT, BBM and AIL1. Expressed in roots, stems, leaves and floral buds.

The protein resides in the nucleus. Its function is as follows. Probable transcription factor involved in the regulation of the tissue-specific accumulation of anthocyanins and in cellular organization of the primary root. This is Homeobox-leucine zipper protein ANTHOCYANINLESS 2 from Arabidopsis thaliana (Mouse-ear cress).